Here is a 279-residue protein sequence, read N- to C-terminus: MIDGHTKLAGVMGWPVEHSRSPLMHNHWCRVNGVNGAYVPLPTHPHGFDQALRGLAAAGFQGVNVTIPHKEAAMLACDELTPTAKRAGAVNTICFVAGRIIGDCTDGTGFCDNLSAHDVAIAGRAMVLGAGGAARAVAAALLDRGCEVVIANRTLERAEALVEALGGGEAVAWYEWPSLLSGCSLLVNATSMGMGGKAGLDWDAALREAAPGLCVTDIVYTPRETPLLLAAQARGLRTVDGLGMLVHQARAGFRAWFGVDPQADRTTFDLLAASLRTDA.

Shikimate is bound by residues 19–21 (SRS) and Thr-66. Lys-70 functions as the Proton acceptor in the catalytic mechanism. Shikimate is bound by residues Asn-91 and Asp-106. Residues 129–133 (GAGGA), 152–157 (NRTLER), and Ile-218 contribute to the NADP(+) site. Residue Tyr-220 coordinates shikimate. Gly-241 contributes to the NADP(+) binding site.

Belongs to the shikimate dehydrogenase family. Homodimer.

It carries out the reaction shikimate + NADP(+) = 3-dehydroshikimate + NADPH + H(+). It functions in the pathway metabolic intermediate biosynthesis; chorismate biosynthesis; chorismate from D-erythrose 4-phosphate and phosphoenolpyruvate: step 4/7. Involved in the biosynthesis of the chorismate, which leads to the biosynthesis of aromatic amino acids. Catalyzes the reversible NADPH linked reduction of 3-dehydroshikimate (DHSA) to yield shikimate (SA). The polypeptide is Shikimate dehydrogenase (NADP(+)) (Gluconobacter oxydans (strain 621H) (Gluconobacter suboxydans)).